Reading from the N-terminus, the 106-residue chain is RNA-binding protein Hfq (106 aa).

The Sm domain maps to 9–68 (DPYLNALRKERVPVSIYLVNGIKLQGQIESFDAFVILLRNNISQMVYKHAVSTIVPSRNI). The interval 78 to 106 (EDEAGEEISAEYTPNAEGQAEATADPLYD) is disordered.

This sequence belongs to the Hfq family. Homohexamer.

RNA chaperone that binds small regulatory RNA (sRNAs) and mRNAs to facilitate mRNA translational regulation in response to envelope stress, environmental stress and changes in metabolite concentrations. Also binds with high specificity to tRNAs. The polypeptide is RNA-binding protein Hfq (Dichelobacter nodosus (strain VCS1703A)).